The primary structure comprises 880 residues: Valine--tRNA ligase (880 aa).

The 'HIGH' region motif lies at 49–59 (PNVTGKLHLGH). The 'KMSKS' region signature appears at 525–529 (KMSKS). An ATP-binding site is contributed by lysine 528. A coiled-coil region spans residues 809-879 (LAGLLDLEEE…AVRARIKELK (71 aa)).

Belongs to the class-I aminoacyl-tRNA synthetase family. ValS type 1 subfamily. In terms of assembly, monomer.

It localises to the cytoplasm. It carries out the reaction tRNA(Val) + L-valine + ATP = L-valyl-tRNA(Val) + AMP + diphosphate. In terms of biological role, catalyzes the attachment of valine to tRNA(Val). As ValRS can inadvertently accommodate and process structurally similar amino acids such as threonine, to avoid such errors, it has a 'posttransfer' editing activity that hydrolyzes mischarged Thr-tRNA(Val) in a tRNA-dependent manner. The polypeptide is Valine--tRNA ligase (Halalkalibacterium halodurans (strain ATCC BAA-125 / DSM 18197 / FERM 7344 / JCM 9153 / C-125) (Bacillus halodurans)).